A 127-amino-acid polypeptide reads, in one-letter code: Protein yippee-like 4 (127 aa).

In terms of domain architecture, Yippee spans 27-124; that stretch reads RTYSCVHCRA…IEMSHMVKDN (98 aa). Zn(2+)-binding residues include cysteine 31, cysteine 34, cysteine 87, and cysteine 90. Phosphothreonine occurs at positions 92 and 93. Tyrosine 98 carries the phosphotyrosine modification.

The protein belongs to the yippee family. Detected in brain, spleen and testis.

The protein localises to the nucleus. The protein resides in the nucleolus. The chain is Protein yippee-like 4 (Ypel4) from Mus musculus (Mouse).